A 61-amino-acid chain; its full sequence is Probable tautomerase LMOf2365_2536 (61 aa).

Residue Pro2 is the Proton acceptor; via imino nitrogen of the active site.

Belongs to the 4-oxalocrotonate tautomerase family.

The chain is Probable tautomerase LMOf2365_2536 from Listeria monocytogenes serotype 4b (strain F2365).